A 67-amino-acid polypeptide reads, in one-letter code: V-type proton ATPase subunit e (67 aa).

The Lumenal portion of the chain corresponds to 1–2 (MG). A helical membrane pass occupies residues 3-23 (GLVVLLVGLLTALMSVVSYYV). At 24-35 (SPKGNNTSTWQM) the chain is on the cytoplasmic side. A helical membrane pass occupies residues 36 to 56 (SLILTFSCCYLLWAITYLAQL). The Lumenal segment spans residues 57–67 (HPLEAPSRVLE).

This sequence belongs to the V-ATPase e1/e2 subunit family. V-ATPase is a heteromultimeric enzyme composed of a peripheral catalytic V1 complex (components A to H) attached to an integral membrane V0 proton pore complex (components: a, c, c', c'', d, e, f and VOA1).

It is found in the vacuole membrane. Subunit of the V0 complex of vacuolar(H+)-ATPase (V-ATPase), a multisubunit enzyme composed of a peripheral complex (V1) that hydrolyzes ATP and a membrane integral complex (V0) that translocates protons. V-ATPase is responsible for acidifying and maintaining the pH of intracellular compartments. This chain is V-type proton ATPase subunit e (vma9), found in Schizosaccharomyces pombe (strain 972 / ATCC 24843) (Fission yeast).